A 156-amino-acid chain; its full sequence is Ribosomal RNA large subunit methyltransferase H (156 aa).

Residues Leu73, Gly104, and 123–128 contribute to the S-adenosyl-L-methionine site; that span reads LSPLTL.

It belongs to the RNA methyltransferase RlmH family. In terms of assembly, homodimer.

Its subcellular location is the cytoplasm. It catalyses the reaction pseudouridine(1915) in 23S rRNA + S-adenosyl-L-methionine = N(3)-methylpseudouridine(1915) in 23S rRNA + S-adenosyl-L-homocysteine + H(+). Functionally, specifically methylates the pseudouridine at position 1915 (m3Psi1915) in 23S rRNA. This Pectobacterium atrosepticum (strain SCRI 1043 / ATCC BAA-672) (Erwinia carotovora subsp. atroseptica) protein is Ribosomal RNA large subunit methyltransferase H.